The following is a 309-amino-acid chain: MEMO1 family protein C4H3.04c (309 aa).

This sequence belongs to the MEMO1 family.

The polypeptide is MEMO1 family protein C4H3.04c (Schizosaccharomyces pombe (strain 972 / ATCC 24843) (Fission yeast)).